Here is a 650-residue protein sequence, read N- to C-terminus: Protein KINESIN LIGHT CHAIN-RELATED 3 (650 aa).

A disordered region spans residues 104–141 (EKQTGKKNVTKSNVGVGGMRKKKVGGTKLQNGNEEPSS). A compositionally biased stretch (polar residues) spans 131 to 141 (KLQNGNEEPSS). TPR repeat units follow at residues 192–225 (IMCLHVTAAVHCKLKEYNEAIPVLQRSVEIPVVE), 235–268 (FAGLMQLGDTYAMVGQLESSISCYTEGLNIQKKV), 277–310 (GETCRYLAEALVQALRFDEAQQVCETALSIHRES), 319–353 (AADRRLMGLICETKGDHENALEHLVLASMAMAANG), 359–392 (AFVDTSIGDSYLSLSRFDEAICAYQKSLTALKTA), 401–434 (GSVYIRLADLYNRTGKVREAKSYCENALRIYESH), 444–477 (ASGLTDISVICESMNEVEQAITLLQKALKIYADS), 485–518 (AGIEAQMGVLYYMMGKYMESYNTFKSAISKLRAT), 527–560 (GIALNQMGLACIQLDAIEEAVELFEEAKCILEQE), and 569–602 (LGLYSNLAGAYDAIGRLDDAIKLLGHVVGVREEK).

This sequence belongs to the kinesin light chain family.

This Arabidopsis thaliana (Mouse-ear cress) protein is Protein KINESIN LIGHT CHAIN-RELATED 3.